The chain runs to 195 residues: CASP-like protein IN26 (195 aa).

Residues 1–26 lie on the Cytoplasmic side of the membrane; the sequence is VAPTGSVETEKAGPSYKPKEYYKVTE. Residues 27–47 form a helical membrane-spanning segment; it reads AILRLLLLASLVVAVVVMVTS. The Extracellular segment spans residues 48–75; it reads KETELISVKLDPFPPFMLPLTAKFTQSP. Residues 76–96 form a helical membrane-spanning segment; it reads AFIYFVAGLSVAGLYTIISTL. Topologically, residues 97-120 are cytoplasmic; the sequence is ASFYNLLIKPGFCPALVSHFIILD. The helical transmembrane segment at 121-143 threads the bilayer; the sequence is VVMLGIVGTATGAAGGVAYIGLK. Topologically, residues 144-163 are extracellular; sequence GNSHVGWTKVCNKYGKLCTH. The chain crosses the membrane as a helical span at residues 164–184; it reads LGASLAVSFFAFIVLLLLIIL. Over 185 to 195 the chain is Cytoplasmic; sequence SIHSLSKKIPK.

It belongs to the Casparian strip membrane proteins (CASP) family. Homodimer and heterodimers.

It localises to the cell membrane. This Ipomoea nil (Japanese morning glory) protein is CASP-like protein IN26 (IN26).